The following is a 205-amino-acid chain: Tic20 family protein Ycf60 (205 aa).

A run of 5 helical transmembrane segments spans residues 5–25, 54–74, 102–122, 130–150, and 163–183; these read LFVN…VILI, AISC…FGIV, LIGF…IIQI, IVQA…LTSL, and LADT…TDAL.

Belongs to the Tic20 family.

The protein resides in the plastid. It is found in the chloroplast membrane. The chain is Tic20 family protein Ycf60 (ycf60) from Cyanidium caldarium (Red alga).